The following is a 151-amino-acid chain: Transcription elongation factor Spt5 (151 aa).

The KOW domain occupies 98 to 128; it reads PGQVVEIVAGAFKGMKARVIDVNQSKGQVTV.

The protein belongs to the archaeal Spt5 family. Heterodimer composed of Spt4 and Spt5. Interacts with RNA polymerase (RNAP).

Its function is as follows. Stimulates transcription elongation. This Aeropyrum pernix (strain ATCC 700893 / DSM 11879 / JCM 9820 / NBRC 100138 / K1) protein is Transcription elongation factor Spt5.